A 131-amino-acid chain; its full sequence is Glycine cleavage system H protein (131 aa).

One can recognise a Lipoyl-binding domain in the interval 24–106 (RAIVGVSDHA…YGEGWIMVIE (83 aa)). N6-lipoyllysine is present on Lys-65.

The protein belongs to the GcvH family. As to quaternary structure, the glycine cleavage system is composed of four proteins: P, T, L and H. Requires (R)-lipoate as cofactor.

Functionally, the glycine cleavage system catalyzes the degradation of glycine. The H protein shuttles the methylamine group of glycine from the P protein to the T protein. The protein is Glycine cleavage system H protein of Xylella fastidiosa (strain Temecula1 / ATCC 700964).